A 171-amino-acid chain; its full sequence is uncharacterized protein (171 aa).

A disordered region spans residues 123–171 (CTKRDLRNDPPPAYQPDDPLKDLRKNFEKKEKPTWNDVEKKKNGVFEFH). Positions 140 to 171 (DPLKDLRKNFEKKEKPTWNDVEKKKNGVFEFH) are enriched in basic and acidic residues.

This is an uncharacterized protein from Caenorhabditis elegans.